Reading from the N-terminus, the 203-residue chain is Nucleoside triphosphate pyrophosphatase (203 aa).

Aspartate 80 functions as the Proton acceptor in the catalytic mechanism.

This sequence belongs to the Maf family. A divalent metal cation serves as cofactor.

It is found in the cytoplasm. The catalysed reaction is a ribonucleoside 5'-triphosphate + H2O = a ribonucleoside 5'-phosphate + diphosphate + H(+). The enzyme catalyses a 2'-deoxyribonucleoside 5'-triphosphate + H2O = a 2'-deoxyribonucleoside 5'-phosphate + diphosphate + H(+). Nucleoside triphosphate pyrophosphatase. May have a dual role in cell division arrest and in preventing the incorporation of modified nucleotides into cellular nucleic acids. The polypeptide is Nucleoside triphosphate pyrophosphatase (Gluconobacter oxydans (strain 621H) (Gluconobacter suboxydans)).